The sequence spans 257 residues: Ribonuclease PH (257 aa).

Residues R88 and 126 to 128 (GTR) each bind phosphate.

The protein belongs to the RNase PH family. Homohexameric ring arranged as a trimer of dimers.

It catalyses the reaction tRNA(n+1) + phosphate = tRNA(n) + a ribonucleoside 5'-diphosphate. Its function is as follows. Phosphorolytic 3'-5' exoribonuclease that plays an important role in tRNA 3'-end maturation. Removes nucleotide residues following the 3'-CCA terminus of tRNAs; can also add nucleotides to the ends of RNA molecules by using nucleoside diphosphates as substrates, but this may not be physiologically important. Probably plays a role in initiation of 16S rRNA degradation (leading to ribosome degradation) during starvation. This is Ribonuclease PH from Nocardia farcinica (strain IFM 10152).